The following is a 244-amino-acid chain: Large ribosomal subunit protein uL30B (244 aa).

Positions 1-11 are enriched in polar residues; it reads MSTEKILTPES. A disordered region spans residues 1-21; that stretch reads MSTEKILTPESQLKKTKAQQK.

The protein belongs to the universal ribosomal protein uL30 family. Component of the large ribosomal subunit (LSU). Mature yeast ribosomes consist of a small (40S) and a large (60S) subunit. The 40S small subunit contains 1 molecule of ribosomal RNA (18S rRNA) and 33 different proteins (encoded by 57 genes). The large 60S subunit contains 3 rRNA molecules (25S, 5.8S and 5S rRNA) and 46 different proteins (encoded by 81 genes).

The protein localises to the cytoplasm. In terms of biological role, component of the ribosome, a large ribonucleoprotein complex responsible for the synthesis of proteins in the cell. The small ribosomal subunit (SSU) binds messenger RNAs (mRNAs) and translates the encoded message by selecting cognate aminoacyl-transfer RNA (tRNA) molecules. The large subunit (LSU) contains the ribosomal catalytic site termed the peptidyl transferase center (PTC), which catalyzes the formation of peptide bonds, thereby polymerizing the amino acids delivered by tRNAs into a polypeptide chain. The nascent polypeptides leave the ribosome through a tunnel in the LSU and interact with protein factors that function in enzymatic processing, targeting, and the membrane insertion of nascent chains at the exit of the ribosomal tunnel. The protein is Large ribosomal subunit protein uL30B of Saccharomyces cerevisiae (strain ATCC 204508 / S288c) (Baker's yeast).